The sequence spans 341 residues: Probable dual-specificity RNA methyltransferase RlmN (341 aa).

Catalysis depends on Glu88, which acts as the Proton acceptor. One can recognise a Radical SAM core domain in the interval 94–314 (EGDRATLCIS…ESHGFTCTIR (221 aa)). Residues Cys101 and Cys325 are joined by a disulfide bond. Residues Cys108, Cys112, and Cys115 each contribute to the [4Fe-4S] cluster site. S-adenosyl-L-methionine is bound by residues 153–154 (GE), Ser185, 206–208 (SLH), and His282. Catalysis depends on Cys325, which acts as the S-methylcysteine intermediate.

It belongs to the radical SAM superfamily. RlmN family. Requires [4Fe-4S] cluster as cofactor.

The protein resides in the cytoplasm. The catalysed reaction is adenosine(2503) in 23S rRNA + 2 reduced [2Fe-2S]-[ferredoxin] + 2 S-adenosyl-L-methionine = 2-methyladenosine(2503) in 23S rRNA + 5'-deoxyadenosine + L-methionine + 2 oxidized [2Fe-2S]-[ferredoxin] + S-adenosyl-L-homocysteine. It carries out the reaction adenosine(37) in tRNA + 2 reduced [2Fe-2S]-[ferredoxin] + 2 S-adenosyl-L-methionine = 2-methyladenosine(37) in tRNA + 5'-deoxyadenosine + L-methionine + 2 oxidized [2Fe-2S]-[ferredoxin] + S-adenosyl-L-homocysteine. Functionally, specifically methylates position 2 of adenine 2503 in 23S rRNA and position 2 of adenine 37 in tRNAs. The protein is Probable dual-specificity RNA methyltransferase RlmN of Porphyromonas gingivalis (strain ATCC BAA-308 / W83).